Consider the following 66-residue polypeptide: MRCVPVFLILLGLIASAPSVDARPQTKDDALASFHDSAKRHLQRLVNARKCCPESPPCCHYFGRRK.

Residues 1–22 (MRCVPVFLILLGLIASAPSVDA) form the signal peptide. Positions 23 to 48 (RPQTKDDALASFHDSAKRHLQRLVNA) are excised as a propeptide. Phenylalanine 62 is modified (phenylalanine amide).

Belongs to the conotoxin T superfamily. Contains 2 disulfide bonds that can be either 'C1-C3, C2-C4' or 'C1-C4, C2-C3', since these disulfide connectivities have been observed for conotoxins with cysteine framework V (for examples, see AC P0DQQ7 and AC P81755). In terms of tissue distribution, expressed by the venom duct.

Its subcellular location is the secreted. This Conus caracteristicus (Characteristic cone) protein is Conotoxin Ca5.2.